Reading from the N-terminus, the 140-residue chain is Resuscitation-promoting factor RpfC (140 aa).

The N-terminal stretch at Met1–Ala31 is a signal peptide.

This sequence belongs to the transglycosylase family. Rpf subfamily.

It localises to the secreted. Its function is as follows. Factor that stimulates resuscitation of dormant cells. Has peptidoglycan (PG) hydrolytic activity. This chain is Resuscitation-promoting factor RpfC (rpfC), found in Mycobacterium tuberculosis (strain ATCC 35801 / TMC 107 / Erdman).